The chain runs to 21 residues: Peptide PGLa-BM2 (21 aa).

Ala21 is modified (alanine amide).

As to expression, expressed by the skin glands.

The protein localises to the secreted. Its function is as follows. Antimicrobial peptide. This is Peptide PGLa-BM2 from Xenopus boumbaensis (Mawa clawed frog).